A 578-amino-acid chain; its full sequence is Acyl-CoA ligase AKT1 (578 aa).

ATP contacts are provided by residues 210-218 (SSGTSGAQK), 350-355 (QCYGAT), D438, R457, and K554. The SBD1 stretch occupies residues 281–350 (DVEDLLSIVE…RHHPTWKTKQ (70 aa)). Positions 351 to 413 (CYGATEAGTA…VSSPSLAIGY (63 aa)) are SBD2. A Peroxisomal targeting signal type 1 motif is present at residues 576-578 (SKI).

Its subcellular location is the peroxisome. It participates in mycotoxin biosynthesis. Its function is as follows. Acyl-CoA ligase; part of the gene clusters that mediate the biosynthesis of the host-selective toxins (HSTs) AK-toxins responsible for Japanese pear black spot disease by the Japanese pear pathotype. AK-toxins are esters of 9,10-epoxy 8-hydroxy 9-methyldecatrienoic acid (EDA). On cellular level, AK-toxins affect plasma membrane of susceptible cells and cause a sudden increase in loss of K(+) after a few minutes of toxin treatment. The acyl-CoA ligase AKT1, the hydrolase AKT2 and enoyl-CoA hydratase AKT3 are all involved in the biosynthesis of the AK-, AF- and ACT-toxin common 9,10-epoxy-8-hydroxy-9-methyl-decatrienoic acid (EDA) structural moiety. Part of the EDA biosynthesis occurs in the peroxisome since these 3 enzymes are localized in peroxisomes. The exact roles of the 3 enzymes, as well as of additional AK-toxin clusters enzymes, including AKT4, AKT6 and AKTS1, have still to be elucidated. The Cytochrome P450 monooxygenase AKT7 on the other side functions to limit production of EDA and AK-toxin, probably via the catalysis of a side reaction of EDA or its precursor. This is Acyl-CoA ligase AKT1 from Alternaria alternata (Alternaria rot fungus).